The primary structure comprises 358 residues: Probable undecaprenyl-phosphate N-acetylglucosaminyl 1-phosphate transferase (358 aa).

Transmembrane regions (helical) follow at residues 10–32 (VVAFIVSLLTVLIITPIVKRIAI), 53–72 (MGGLAIFIGVVAGVLASGIY), 76–93 (RMTAITVGAFIIIVLGIL), 105–127 (FLIQLGVAIMIVSTGLKMDFFSV), 137–157 (GWMAYPLTVLWIVGITNAINL), 164–181 (LAAGLSVIGLSTIAVMAL), 186–205 (VLILSLSLVVIASTLGFLFY), 218–235 (GSLFLGYSISILSLLGLY), 240–262 (LFSIVIPIIILGVPIFDTTFAII), 292–311 (MSVLVIYLIGFIFSISAIVL), and 316–338 (IWLSLFIIFILIIFMQIIAEVTG).

It belongs to the glycosyltransferase 4 family. The cofactor is Mg(2+). Mn(2+) serves as cofactor.

It localises to the cell membrane. The enzyme catalyses di-trans,octa-cis-undecaprenyl phosphate + UDP-N-acetyl-alpha-D-glucosamine = N-acetyl-alpha-D-glucosaminyl-di-trans,octa-cis-undecaprenyl diphosphate + UMP. The protein operates within cell wall biogenesis; poly(glucopyranosyl N-acetylgalactosamine 1-phosphate) teichoic acid biosynthesis. Its pathway is cell wall biogenesis; poly(glycerol phosphate) teichoic acid biosynthesis. Catalyzes the formation of undecaprenyl-PP-N-acetylglucosamine. Involved in the synthesis of anionic cell-wall polymers as it mediates the initiation of the linkage unit formation that appears to be common to the two types of teichoic acids attached to the peptidoglycan of B.subtilis; may also be involved in teichuronic acid biosynthesis. The protein is Probable undecaprenyl-phosphate N-acetylglucosaminyl 1-phosphate transferase (tagO) of Bacillus subtilis (strain 168).